The chain runs to 537 residues: MGDEDKRITYEDSEPSTGMNYTPSMHQEAQEETVMKLKGIDANEPTEGSILLKSSEKKLQETPTEANHVQRLRQMLACPPHGLLDRVITNVTIIVLLWAVVWSITGSECLPGGNLFGIIILFYCAIIGGKLLGLIKLPTLPPLPSLLGMLLAGFLIRNIPVINDNVQIKHKWSSSLRSIALSIILVRAGLGLDSKALKKLKGVCVRLSMGPCIVEACTSALLAHYLLGLPWQWGFILGFVLGAVSPAVVVPSMLLLQGGGYGVEKGVPTLLMAAGSFDDILAITGFNTCLGIAFSTGSTVFNVLRGVLEVVIGVATGSVLGFFIQYFPSRDQDKLVCKRTFLVLGLSVLAVFSSVHFGFPGSGGLCTLVMAFLAGMGWTSEKAEVEKIIAVAWDIFQPLLFGLIGAEVSIASLRPETVGLCVATVGIAVLIRILTTFLMVCFAGFNLKEKIFISFAWLPKATVQAAIGSVALDTARSHGEKQLEDYGMDVLTVAFLSILITAPIGSLLIGLLGPRLLQKVEHQNKDEEVQGETSVQV.

Residues 1–10 (MGDEDKRITY) show a composition bias toward basic and acidic residues. The segment at 1–28 (MGDEDKRITYEDSEPSTGMNYTPSMHQE) is disordered. The Cytoplasmic portion of the chain corresponds to 1–86 (MGDEDKRITY…ACPPHGLLDR (86 aa)). Over residues 15–27 (PSTGMNYTPSMHQ) the composition is skewed to polar residues. Position 49 is a phosphoserine (S49). A helical membrane pass occupies residues 87–104 (VITNVTIIVLLWAVVWSI). The Extracellular portion of the chain corresponds to 105–113 (TGSECLPGG). Residues 114–133 (NLFGIIILFYCAIIGGKLLG) traverse the membrane as a helical segment. Over 134 to 144 (LIKLPTLPPLP) the chain is Cytoplasmic. The chain crosses the membrane as a helical span at residues 145 to 161 (SLLGMLLAGFLIRNIPV). The Extracellular portion of the chain corresponds to 162 to 171 (INDNVQIKHK). The helical transmembrane segment at 172 to 189 (WSSSLRSIALSIILVRAG) threads the bilayer. The Cytoplasmic portion of the chain corresponds to 190-200 (LGLDSKALKKL). The chain crosses the membrane as a helical span at residues 201-227 (KGVCVRLSMGPCIVEACTSALLAHYLL). Residues 228-233 (GLPWQW) are Extracellular-facing. A helical transmembrane segment spans residues 234–242 (GFILGFVLG). The Cytoplasmic segment spans residues 243–270 (AVSPAVVVPSMLLLQGGGYGVEKGVPTL). Positions 244, 275, 278, and 279 each coordinate Na(+). The helical transmembrane segment at 271-290 (LMAAGSFDDILAITGFNTCL) threads the bilayer. At 291–300 (GIAFSTGSTV) the chain is on the extracellular side. A helical membrane pass occupies residues 301-324 (FNVLRGVLEVVIGVATGSVLGFFI). Residues 325–339 (QYFPSRDQDKLVCKR) lie on the Cytoplasmic side of the membrane. Residues 340–357 (TFLVLGLSVLAVFSSVHF) form a helical membrane-spanning segment. The Extracellular portion of the chain corresponds to 358–361 (GFPG). The chain crosses the membrane as a helical span at residues 362 to 373 (SGGLCTLVMAFL). At 374–390 (AGMGWTSEKAEVEKIIA) the chain is on the cytoplasmic side. Residues 391 to 411 (VAWDIFQPLLFGLIGAEVSIA) form a helical membrane-spanning segment. At 412–417 (SLRPET) the chain is on the extracellular side. The helical transmembrane segment at 418 to 440 (VGLCVATVGIAVLIRILTTFLMV) threads the bilayer. Over 441-461 (CFAGFNLKEKIFISFAWLPKA) the chain is Cytoplasmic. Residues 462–473 (TVQAAIGSVALD) traverse the membrane as a helical segment. The Extracellular segment spans residues 474 to 486 (TARSHGEKQLEDY). A helical transmembrane segment spans residues 487 to 509 (GMDVLTVAFLSILITAPIGSLLI). The Cytoplasmic portion of the chain corresponds to 510-537 (GLLGPRLLQKVEHQNKDEEVQGETSVQV).

This sequence belongs to the monovalent cation:proton antiporter 1 (CPA1) transporter (TC 2.A.36) family. As to quaternary structure, homodimer. Dimerization is essential for SLC9B2 activity. Lipids seem to play a role in the stabilization of the dimerization subdomain. Widely expressed. High levels detected in the distal tubules of the kidney nephron. Detected in red blood cells (at protein level).

It is found in the cell membrane. The protein resides in the mitochondrion membrane. It localises to the endosome membrane. The protein localises to the recycling endosome membrane. Its subcellular location is the cytoplasmic vesicle. It is found in the secretory vesicle. The protein resides in the synaptic vesicle membrane. It localises to the cell projection. The protein localises to the cilium. Its subcellular location is the flagellum membrane. It is found in the basolateral cell membrane. The protein resides in the apical cell membrane. The enzyme catalyses Li(+)(out) + H(+)(in) = Li(+)(in) + H(+)(out). The catalysed reaction is Li(+)(in) + Na(+)(out) = Li(+)(out) + Na(+)(in). It catalyses the reaction Na(+)(in) + H(+)(out) = Na(+)(out) + H(+)(in). Its activity is regulated as follows. Allosterically inhibited by the N-terminal domain. Inhibited by phloretin. Its function is as follows. Electroneutral Na(+) Li(+)/H(+) antiporter that extrudes Na(+) or Li(+) in exchange for external protons across the membrane. Uses the proton gradient/membrane potential to extrude sodium. Contributes to the regulation of intracellular pH and sodium homeostasis. Also able to mediate Na(+)/Li(+) antiporter activity in kidney. May play a physiological role in renal tubular function and blood pressure homeostasis. Plays an important role for insulin secretion and clathrin-mediated endocytosis in beta-cells. Involved in sperm motility and fertility. It is controversial whether SLC9B2 plays a role in osteoclast differentiation or not. The chain is Sodium/hydrogen exchanger 9B2 from Homo sapiens (Human).